Consider the following 399-residue polypeptide: Glycosyltransferase BC10 (399 aa).

Topologically, residues 1–17 (MKPPRRWMYGRGGGKGK) are cytoplasmic. The chain crosses the membrane as a helical; Signal-anchor for type II membrane protein span at residues 18-38 (PAGLLLLGVFLCLSVVLLLLL). The Lumenal segment spans residues 39 to 399 (HGSSPSLEGE…LIAANGASTM (361 aa)). N-linked (GlcNAc...) asparagine glycans are attached at residues Asn-142 and Asn-188.

The protein belongs to the glycosyltransferase 14 family. In terms of tissue distribution, expressed in roots, culms, leaves and panicles. Expressed in vascular bundles of leaf sheaths and stems where sclerenchyma cells are developing. Expressed in mechanical tissues of young organs, such as young leaf sheaths, stems and tiller buds.

Its subcellular location is the membrane. Functionally, glycosyltransferase required for the regulation of cellulose biosynthesis in the cell wall. Required for the biosynthesis of hexoses (glucose, mannose and galactose) in both cellulosic and non-cellulosic (pectins and hemicelluloses) components of cell walls. Required for the formation of arabinogalactan proteins which contribute to the strengthening of cell walls. Possesses low glycosyltransferase activity. This is Glycosyltransferase BC10 from Oryza sativa subsp. japonica (Rice).